The sequence spans 153 residues: Small ribosomal subunit protein bS16 (153 aa).

Residues glutamate 114–lysine 153 are disordered. The span at alanine 137–lysine 153 shows a compositional bias: low complexity.

It belongs to the bacterial ribosomal protein bS16 family.

This chain is Small ribosomal subunit protein bS16, found in Rhodococcus opacus (strain B4).